The primary structure comprises 360 residues: Alanine racemase (360 aa).

Lysine 34 serves as the catalytic Proton acceptor; specific for D-alanine. Lysine 34 carries the N6-(pyridoxal phosphate)lysine modification. Substrate is bound at residue arginine 129. Tyrosine 254 serves as the catalytic Proton acceptor; specific for L-alanine. A substrate-binding site is contributed by methionine 302.

The protein belongs to the alanine racemase family. Requires pyridoxal 5'-phosphate as cofactor.

The catalysed reaction is L-alanine = D-alanine. Its pathway is amino-acid biosynthesis; D-alanine biosynthesis; D-alanine from L-alanine: step 1/1. In terms of biological role, catalyzes the interconversion of L-alanine and D-alanine. May also act on other amino acids. This is Alanine racemase (alr) from Pectobacterium carotovorum subsp. carotovorum (strain PC1).